A 374-amino-acid chain; its full sequence is Glutamate 5-kinase (374 aa).

K16 is a binding site for ATP. Positions 56, 143, and 155 each coordinate substrate. Residues 175–176 (TD) and 217–223 (SGGMLTK) each bind ATP. Positions 282–360 (RGALILDDGA…SNIGAILGYK (79 aa)) constitute a PUA domain.

This sequence belongs to the glutamate 5-kinase family.

The protein localises to the cytoplasm. The enzyme catalyses L-glutamate + ATP = L-glutamyl 5-phosphate + ADP. It participates in amino-acid biosynthesis; L-proline biosynthesis; L-glutamate 5-semialdehyde from L-glutamate: step 1/2. Its function is as follows. Catalyzes the transfer of a phosphate group to glutamate to form L-glutamate 5-phosphate. This chain is Glutamate 5-kinase, found in Marinomonas sp. (strain MWYL1).